Consider the following 473-residue polypeptide: Serine/threonine-protein phosphatase 2A activator 1 (473 aa).

The interval 360-473 (NAVPPPTSAH…HVPTKAPWAK (114 aa)) is disordered. The span at 368–378 (AHMSTTQSQSR) shows a compositional bias: polar residues. The segment covering 395 to 416 (APWATATQAAPPAGAGTAAPWA) has biased composition (low complexity).

It belongs to the PTPA-type PPIase family.

The protein localises to the cytoplasm. It is found in the nucleus. The catalysed reaction is [protein]-peptidylproline (omega=180) = [protein]-peptidylproline (omega=0). Its function is as follows. PPIases accelerate the folding of proteins. It catalyzes the cis-trans isomerization of proline imidic peptide bonds in oligopeptides. Acts as a regulatory subunit for PP2A-like phosphatases modulating their activity or substrate specificity, probably by inducing a conformational change in the catalytic subunit, a direct target of the PPIase. Can reactivate inactive phosphatase PP2A-phosphatase methylesterase complexes (PP2Ai) in presence of ATP and Mg(2+) by dissociating the inactive form from the complex. This is Serine/threonine-protein phosphatase 2A activator 1 (rrd1) from Aspergillus fumigatus (strain ATCC MYA-4609 / CBS 101355 / FGSC A1100 / Af293) (Neosartorya fumigata).